Consider the following 115-residue polypeptide: Large ribosomal subunit protein bL19 (115 aa).

It belongs to the bacterial ribosomal protein bL19 family.

Its function is as follows. This protein is located at the 30S-50S ribosomal subunit interface and may play a role in the structure and function of the aminoacyl-tRNA binding site. This Thermotoga maritima (strain ATCC 43589 / DSM 3109 / JCM 10099 / NBRC 100826 / MSB8) protein is Large ribosomal subunit protein bL19 (rplS).